A 199-amino-acid polypeptide reads, in one-letter code: V-type ATP synthase subunit E (199 aa).

It belongs to the V-ATPase E subunit family.

Functionally, produces ATP from ADP in the presence of a proton gradient across the membrane. This is V-type ATP synthase subunit E (atpE) from Borreliella burgdorferi (strain ATCC 35210 / DSM 4680 / CIP 102532 / B31) (Borrelia burgdorferi).